We begin with the raw amino-acid sequence, 99 residues long: uncharacterized protein (99 aa).

A coiled-coil region spans residues 43-95 (ENEEIYADQVRRIKLRLRELRETYATSEDNWRELMDNLEELRDQIERLAIRGG).

This is an uncharacterized protein from Archaeoglobus fulgidus (strain ATCC 49558 / DSM 4304 / JCM 9628 / NBRC 100126 / VC-16).